The primary structure comprises 743 residues: Polyribonucleotide nucleotidyltransferase (743 aa).

Residues aspartate 489 and aspartate 495 each coordinate Mg(2+). The 63-residue stretch at 556 to 618 (PRIEKMHIGK…PCIDAAIGMI (63 aa)) folds into the KH domain. The S1 motif domain occupies 628-698 (GETYPGKITS…KTGKFKLSRK (71 aa)). A disordered region spans residues 704–743 (PEGYVEPQPRERRERREGGREGGRNFERRGGDRDHREPRG).

The protein belongs to the polyribonucleotide nucleotidyltransferase family. Requires Mg(2+) as cofactor.

The protein localises to the cytoplasm. The enzyme catalyses RNA(n+1) + phosphate = RNA(n) + a ribonucleoside 5'-diphosphate. Involved in mRNA degradation. Catalyzes the phosphorolysis of single-stranded polyribonucleotides processively in the 3'- to 5'-direction. The sequence is that of Polyribonucleotide nucleotidyltransferase from Porphyromonas gingivalis (strain ATCC 33277 / DSM 20709 / CIP 103683 / JCM 12257 / NCTC 11834 / 2561).